The chain runs to 892 residues: Alanine--tRNA ligase (892 aa).

Residues histidine 574, histidine 578, cysteine 677, and histidine 681 each contribute to the Zn(2+) site.

The protein belongs to the class-II aminoacyl-tRNA synthetase family. Zn(2+) is required as a cofactor.

The protein localises to the cytoplasm. It carries out the reaction tRNA(Ala) + L-alanine + ATP = L-alanyl-tRNA(Ala) + AMP + diphosphate. Catalyzes the attachment of alanine to tRNA(Ala) in a two-step reaction: alanine is first activated by ATP to form Ala-AMP and then transferred to the acceptor end of tRNA(Ala). Also edits incorrectly charged Ser-tRNA(Ala) and Gly-tRNA(Ala) via its editing domain. This is Alanine--tRNA ligase from Mesoplasma florum (strain ATCC 33453 / NBRC 100688 / NCTC 11704 / L1) (Acholeplasma florum).